We begin with the raw amino-acid sequence, 511 residues long: Histidine ammonia-lyase (511 aa).

The segment at residues Ala-142–Gly-144 is a cross-link (5-imidazolinone (Ala-Gly)). At Ser-143 the chain carries 2,3-didehydroalanine (Ser).

It belongs to the PAL/histidase family. Post-translationally, contains an active site 4-methylidene-imidazol-5-one (MIO), which is formed autocatalytically by cyclization and dehydration of residues Ala-Ser-Gly.

It is found in the cytoplasm. It catalyses the reaction L-histidine = trans-urocanate + NH4(+). The protein operates within amino-acid degradation; L-histidine degradation into L-glutamate; N-formimidoyl-L-glutamate from L-histidine: step 1/3. This chain is Histidine ammonia-lyase, found in Brucella anthropi (strain ATCC 49188 / DSM 6882 / CCUG 24695 / JCM 21032 / LMG 3331 / NBRC 15819 / NCTC 12168 / Alc 37) (Ochrobactrum anthropi).